Consider the following 271-residue polypeptide: Aquaporin-1 (271 aa).

At 1-11 (MASEFKKKLFW) the chain is on the cytoplasmic side. Residues 12 to 29 (RAVVAEFLAMILFIFISI) traverse the membrane as a helical segment. The Extracellular portion of the chain corresponds to 30-48 (GSALGFHYPIKSNQTTGAV). N42 carries N-linked (GlcNAc...) asparagine glycosylation. The helical transmembrane segment at 49–67 (QDNVKVSLAFGLSIATLAQ) threads the bilayer. At 68-70 (SVG) the chain is on the cytoplasmic side. An intramembrane segment occupies 71–84 (HISGAHLNPAVTLG). An NPA 1 motif is present at residues 78-80 (NPA). Residues 85–92 (LLLSCQIS) lie on the Cytoplasmic side of the membrane. A helical transmembrane segment spans residues 93–111 (VLRAIMYIIAQCVGAIVAT). Residues 112-135 (AILSGITSSLPDNSLGLNALAPGV) are Extracellular-facing. A helical transmembrane segment spans residues 136-155 (NSGQGLGIEIIGTLQLVLCV). Topologically, residues 156–165 (LATTDRRRRD) are cytoplasmic. A helical membrane pass occupies residues 166 to 183 (LGGSGPLAIGFSVALGHL). At 184–188 (LAIDY) the chain is on the extracellular side. The stretch at 189 to 201 (TGCGINPARSFGS) is an intramembrane region. The short motif at 194 to 196 (NPA) is the NPA 2 element. Residues 202–208 (SVITHNF) are Extracellular-facing. Residues 209–226 (QDHWIFWVGPFIGAALAV) traverse the membrane as a helical segment. The Cytoplasmic segment spans residues 227-271 (LIYDFILAPRSSDLTDRVKVWTSGQVEEYDLDADDINSRVEMKPK). S249 carries the phosphoserine modification. A Phosphotyrosine modification is found at Y255. Phosphoserine is present on S264.

The protein belongs to the MIP/aquaporin (TC 1.A.8) family. Homotetramer; each monomer provides an independent water pore. Component of the ankyrin-1 complex in the erythrocyte, composed of ANK1, RHCE, RHAG, SLC4A1, EPB42, GYPA, GYPB and AQP1. Interacts with EPHB2; involved in endolymph production in the inner ear. Identified in a complex with STOM. Interacts (via the N-terminal) with ANK1 (via ANK 1-5 repeats). Interacts (via the C-terminal) with EPB42.

Its subcellular location is the cell membrane. It catalyses the reaction H2O(in) = H2O(out). The enzyme catalyses nitric oxide(out) = nitric oxide(in). It carries out the reaction CO2(out) = CO2(in). The catalysed reaction is glycerol(in) = glycerol(out). It catalyses the reaction H2O2(out) = H2O2(in). The enzyme catalyses K(+)(in) = K(+)(out). It carries out the reaction Na(+)(in) = Na(+)(out). Its function is as follows. Forms a water channel that facilitates the transport of water across cell membranes, playing a crucial role in water homeostasis in various tissues. Could also be permeable to small solutes including hydrogen peroxide, glycerol and gases such as amonnia (NH3), nitric oxide (NO) and carbon dioxide (CO2). Recruited to the ankyrin-1 complex, a multiprotein complex of the erythrocyte membrane, it could be part of a CO2 metabolon, linking facilitated diffusion of CO2 across the membrane, anion exchange of Cl(-)/HCO3(-) and interconversion of dissolved CO2 and carbonic acid in the cytosol. In vitro, it shows non-selective gated cation channel activity and may be permeable to cations like K(+) and Na(+) in vivo. In Bos taurus (Bovine), this protein is Aquaporin-1.